Reading from the N-terminus, the 185-residue chain is Protein N-terminal glutamine amidohydrolase (185 aa).

Catalysis depends on residues Cys14, His62, and Asp78.

Belongs to the NTAQ1 family. In terms of assembly, monomer.

The catalysed reaction is N-terminal L-glutaminyl-[protein] + H2O = N-terminal L-glutamyl-[protein] + NH4(+). Functionally, mediates the side-chain deamidation of N-terminal glutamine residues to glutamate, an important step in N-end rule pathway of protein degradation. Conversion of the resulting N-terminal glutamine to glutamate renders the protein susceptible to arginylation, polyubiquitination and degradation as specified by the N-end rule. Does not act on substrates with internal or C-terminal glutamine and does not act on non-glutamine residues in any position. The protein is Protein N-terminal glutamine amidohydrolase of Caenorhabditis briggsae.